The primary structure comprises 499 residues: Bifunctional purine biosynthesis protein PurH (499 aa).

In terms of domain architecture, MGS-like spans 1 to 144 (MIKRALISVF…KNFKDVVVLT (144 aa)).

Belongs to the PurH family.

It carries out the reaction (6R)-10-formyltetrahydrofolate + 5-amino-1-(5-phospho-beta-D-ribosyl)imidazole-4-carboxamide = 5-formamido-1-(5-phospho-D-ribosyl)imidazole-4-carboxamide + (6S)-5,6,7,8-tetrahydrofolate. The enzyme catalyses IMP + H2O = 5-formamido-1-(5-phospho-D-ribosyl)imidazole-4-carboxamide. The protein operates within purine metabolism; IMP biosynthesis via de novo pathway; 5-formamido-1-(5-phospho-D-ribosyl)imidazole-4-carboxamide from 5-amino-1-(5-phospho-D-ribosyl)imidazole-4-carboxamide (10-formyl THF route): step 1/1. It functions in the pathway purine metabolism; IMP biosynthesis via de novo pathway; IMP from 5-formamido-1-(5-phospho-D-ribosyl)imidazole-4-carboxamide: step 1/1. The sequence is that of Bifunctional purine biosynthesis protein PurH from Clostridium botulinum (strain Okra / Type B1).